We begin with the raw amino-acid sequence, 143 residues long: Small ribosomal subunit protein uS12 (143 aa).

Over residues Met-1 to Glu-19 the composition is skewed to basic residues. The disordered stretch occupies residues Met-1 to Arg-21. Residue Pro-62 is modified to Hydroxyproline.

The protein belongs to the universal ribosomal protein uS12 family. In terms of assembly, component of the 40S small ribosomal subunit.

It is found in the cytoplasm. The protein resides in the cytosol. It localises to the rough endoplasmic reticulum. This is Small ribosomal subunit protein uS12 (RpS23) from Papilio dardanus (African swallowtail butterfly).